Consider the following 271-residue polypeptide: Putative pyruvate, phosphate dikinase regulatory protein (271 aa).

153 to 160 lines the ADP pocket; the sequence is GVSRTSKT.

Belongs to the pyruvate, phosphate/water dikinase regulatory protein family. PDRP subfamily.

The enzyme catalyses N(tele)-phospho-L-histidyl/L-threonyl-[pyruvate, phosphate dikinase] + ADP = N(tele)-phospho-L-histidyl/O-phospho-L-threonyl-[pyruvate, phosphate dikinase] + AMP + H(+). The catalysed reaction is N(tele)-phospho-L-histidyl/O-phospho-L-threonyl-[pyruvate, phosphate dikinase] + phosphate + H(+) = N(tele)-phospho-L-histidyl/L-threonyl-[pyruvate, phosphate dikinase] + diphosphate. Functionally, bifunctional serine/threonine kinase and phosphorylase involved in the regulation of the pyruvate, phosphate dikinase (PPDK) by catalyzing its phosphorylation/dephosphorylation. This chain is Putative pyruvate, phosphate dikinase regulatory protein, found in Shouchella clausii (strain KSM-K16) (Alkalihalobacillus clausii).